Here is a 444-residue protein sequence, read N- to C-terminus: 23S rRNA (uracil(1939)-C(5))-methyltransferase RlmD (444 aa).

The 60-residue stretch at 5–64 (KPKLNLTSQTARIVNLSHDGRGIARVNGKATFIQGALPGEVVEFQYTRIKKDFDEGKLLS) folds into the TRAM domain. Residues cysteine 77, cysteine 83, cysteine 86, and cysteine 166 each contribute to the [4Fe-4S] cluster site. S-adenosyl-L-methionine contacts are provided by glutamine 276, phenylalanine 305, asparagine 310, glutamate 326, asparagine 353, and aspartate 374. Residue cysteine 400 is the Nucleophile of the active site.

It belongs to the class I-like SAM-binding methyltransferase superfamily. RNA M5U methyltransferase family. RlmD subfamily.

It catalyses the reaction uridine(1939) in 23S rRNA + S-adenosyl-L-methionine = 5-methyluridine(1939) in 23S rRNA + S-adenosyl-L-homocysteine + H(+). In terms of biological role, catalyzes the formation of 5-methyl-uridine at position 1939 (m5U1939) in 23S rRNA. The sequence is that of 23S rRNA (uracil(1939)-C(5))-methyltransferase RlmD from Legionella pneumophila (strain Corby).